Here is a 405-residue protein sequence, read N- to C-terminus: Deoxyguanosinetriphosphate triphosphohydrolase-like protein (405 aa).

In terms of domain architecture, HD spans 75–219 (RLTHTIEVAQ…AAIADDIAYN (145 aa)).

This sequence belongs to the dGTPase family. Type 2 subfamily.

This Agrobacterium fabrum (strain C58 / ATCC 33970) (Agrobacterium tumefaciens (strain C58)) protein is Deoxyguanosinetriphosphate triphosphohydrolase-like protein.